Reading from the N-terminus, the 208-residue chain is MTKGILGKKVGMTQIFTEAGELIPVTVIEATPNVVLQVKTVETDGYNAVQVGFDDLRDVLSNKPAKGHVAKANTAPKRFIREFKNIEGLEVGAEITVDTFAAGDVVDVTGTSKGKGFQGVIKRHGQSRGPMAHGSRYHRRPGSMGPVAPNRVFKNKHLAGRMGGNRVTIQNLEIAQVVPEKNVILIKGNVPGAKKSLITIKSAVKAGK.

Residues 123–147 (RHGQSRGPMAHGSRYHRRPGSMGPV) form a disordered region.

The protein belongs to the universal ribosomal protein uL3 family. As to quaternary structure, part of the 50S ribosomal subunit. Forms a cluster with proteins L14 and L19.

Functionally, one of the primary rRNA binding proteins, it binds directly near the 3'-end of the 23S rRNA, where it nucleates assembly of the 50S subunit. This chain is Large ribosomal subunit protein uL3, found in Streptococcus gordonii (strain Challis / ATCC 35105 / BCRC 15272 / CH1 / DL1 / V288).